The chain runs to 248 residues: Anamorsin homolog (248 aa).

The tract at residues 4 to 130 (FKGLQKSLYI…ETGSSARLSF (127 aa)) is N-terminal SAM-like domain. The segment at 131-161 (AKKSPSMNVWKISGDDEELIDEEELLDEEDK) is linker. [2Fe-2S] cluster is bound by residues cysteine 172, cysteine 181, cysteine 184, and cysteine 186. The fe-S binding site A stretch occupies residues 172-186 (CSTTGKRKACKNCSC). Cysteine 209, cysteine 212, cysteine 220, and cysteine 223 together coordinate [4Fe-4S] cluster. Short sequence motifs (cx2C motif) lie at residues 209–212 (CGNC) and 220–223 (CSTC). The fe-S binding site B stretch occupies residues 209 to 223 (CGNCYLGDAFRCSTC).

It belongs to the anamorsin family. Monomer. [2Fe-2S] cluster is required as a cofactor. Requires [4Fe-4S] cluster as cofactor.

The protein localises to the cytoplasm. Its subcellular location is the mitochondrion intermembrane space. Its function is as follows. Component of the cytosolic iron-sulfur (Fe-S) protein assembly (CIA) machinery. Required for the maturation of extramitochondrial Fe-S proteins. Part of an electron transfer chain functioning in an early step of cytosolic Fe-S biogenesis, facilitating the de novo assembly of a [4Fe-4S] cluster on the cytosolic Fe-S scaffold complex. Electrons are transferred from NADPH via a FAD- and FMN-containing diflavin oxidoreductase. Together with the diflavin oxidoreductase, also required for the assembly of the diferric tyrosyl radical cofactor of ribonucleotide reductase (RNR), probably by providing electrons for reduction during radical cofactor maturation in the catalytic small subunit. This chain is Anamorsin homolog, found in Drosophila mojavensis (Fruit fly).